A 238-amino-acid chain; its full sequence is Small ribosomal subunit protein uS2 (238 aa).

The protein belongs to the universal ribosomal protein uS2 family.

This is Small ribosomal subunit protein uS2 from Chloroflexus aggregans (strain MD-66 / DSM 9485).